Here is a 462-residue protein sequence, read N- to C-terminus: Probable alcohol acetyltransferase crmB (462 aa).

It belongs to the alcohol acetyltransferase FCK4 family.

It functions in the pathway secondary metabolite biosynthesis. Its function is as follows. Probable alcohol acetyltransferase; part of the crm gene cluster that mediates the biosynthesis of a yet unidentified copper-responsive metabolite. In contrast to crmA, is not involved in the biosynthesis of fumivalines or fumicicolins. This Aspergillus fumigatus (strain ATCC MYA-4609 / CBS 101355 / FGSC A1100 / Af293) (Neosartorya fumigata) protein is Probable alcohol acetyltransferase crmB.